Here is a 27-residue protein sequence, read N- to C-terminus: Potassium channel toxin alpha-KTx 32.1 (27 aa).

2 cysteine pairs are disulfide-bonded: Cys-5/Cys-18 and Cys-12/Cys-25.

In terms of tissue distribution, expressed by the venom gland.

It localises to the secreted. Its function is as follows. Blocker of voltage-gated potassium channels. Inhibits voltage-gated potassium channels Kv1.2/KCNA2 (Kd=0.96 nM) and Kv1.3/KCNA3 (Kd=1.3 nM). Does not inhibit Kv1.1/KCNA1, Kv1.5/KCNA5, Kv11.1/KCNH2/ERG1, KCa1.1/KCNMA1, KCa3.1/KCNN4, NaV1.5/SCN5A, NaV1.4/SCN4A or HV1/HVCN1. Strongly inhibits the expression of the activation markers interleukin-2 receptor and CD40 ligand/CD40LG in anti-CD3-activated CD4(+) TEM lymphocytes. The sequence is that of Potassium channel toxin alpha-KTx 32.1 from Centruroides margaritatus (Central American bark Scorpion).